Reading from the N-terminus, the 623-residue chain is Chaperone protein HtpG (623 aa).

An a; substrate-binding region spans residues 1-336 (MVSKQQTMGF…ASDLPLNISR (336 aa)). A b region spans residues 337–550 (EILQDNKQVE…EQDMGLEMQR (214 aa)). Positions 551–623 (ILQAAGQQVP…NRVNRLLVSS (73 aa)) are c.

Belongs to the heat shock protein 90 family. In terms of assembly, homodimer.

The protein resides in the cytoplasm. Molecular chaperone. Has ATPase activity. In Legionella pneumophila subsp. pneumophila (strain Philadelphia 1 / ATCC 33152 / DSM 7513), this protein is Chaperone protein HtpG.